Here is a 426-residue protein sequence, read N- to C-terminus: uncharacterized protein (426 aa).

Residues 1–23 (MKKFILFLIILLFSIYFLNVSSA) form the signal peptide.

This is an uncharacterized protein from Methanocaldococcus jannaschii (strain ATCC 43067 / DSM 2661 / JAL-1 / JCM 10045 / NBRC 100440) (Methanococcus jannaschii).